We begin with the raw amino-acid sequence, 148 residues long: Snaclec stejaggregin-A subunit beta-2 (148 aa).

Positions 1-23 (MGQFIFVSFGLLVVLLSLSGAGA) are cleaved as a signal peptide. Cys-27 and Cys-38 are disulfide-bonded. Residues 34–145 (YDLYCYKVFK…CSRTHYVVCK (112 aa)) form the C-type lectin domain. N-linked (GlcNAc...) asparagine glycosylation is found at Asn-47 and Asn-78. 2 disulfide bridges follow: Cys-55–Cys-144 and Cys-121–Cys-136.

This sequence belongs to the snaclec family. As to quaternary structure, heteromultimer; disulfide-linked. In terms of tissue distribution, expressed by the venom gland.

It is found in the secreted. Functionally, interferes with one step of hemostasis (modulation of platelet aggregation, or coagulation cascade, for example). This Trimeresurus stejnegeri (Chinese green tree viper) protein is Snaclec stejaggregin-A subunit beta-2.